A 428-amino-acid chain; its full sequence is Enolase (428 aa).

(2R)-2-phosphoglycerate is bound at residue Q163. E205 (proton donor) is an active-site residue. Mg(2+) contacts are provided by D242, E286, and D313. Residues K338, R367, S368, and K389 each contribute to the (2R)-2-phosphoglycerate site. K338 acts as the Proton acceptor in catalysis.

This sequence belongs to the enolase family. Mg(2+) serves as cofactor.

The protein localises to the cytoplasm. It localises to the secreted. Its subcellular location is the cell surface. The catalysed reaction is (2R)-2-phosphoglycerate = phosphoenolpyruvate + H2O. Its pathway is carbohydrate degradation; glycolysis; pyruvate from D-glyceraldehyde 3-phosphate: step 4/5. Catalyzes the reversible conversion of 2-phosphoglycerate (2-PG) into phosphoenolpyruvate (PEP). It is essential for the degradation of carbohydrates via glycolysis. This Bordetella petrii (strain ATCC BAA-461 / DSM 12804 / CCUG 43448) protein is Enolase.